We begin with the raw amino-acid sequence, 119 residues long: U-scoloptoxin(01)-Cw1a (119 aa).

Positions 1-22 (MSKATNFYLFVLLGVFVALVRT) are cleaved as a signal peptide. A Chitin-binding type-2 domain is found at 38-96 (SFSCDGKKPGYYADQQMECQVYHVCTPDNEHAVLLCGPGTIFNQKHLVCDFPSNYACAD). A disulfide bridge connects residues Cys73 and Cys86.

It belongs to the scoloptoxin-01 family. In terms of processing, contains 3 disulfide bonds. In terms of tissue distribution, expressed by the venom gland.

The protein localises to the secreted. This chain is U-scoloptoxin(01)-Cw1a, found in Cormocephalus westwoodi (Westwood's green centipede).